A 591-amino-acid polypeptide reads, in one-letter code: Aspartate--tRNA ligase (591 aa).

Glu-176 is an L-aspartate binding site. The aspartate stretch occupies residues 200–203 (QILK). Arg-222 provides a ligand contact to L-aspartate. ATP contacts are provided by residues 222–224 (RDE) and Gln-231. His-450 is an L-aspartate binding site. Glu-484 serves as a coordination point for ATP. Residue Arg-491 participates in L-aspartate binding. Residue 536–539 (GLDR) participates in ATP binding.

This sequence belongs to the class-II aminoacyl-tRNA synthetase family. Type 1 subfamily. As to quaternary structure, homodimer.

It localises to the cytoplasm. The catalysed reaction is tRNA(Asp) + L-aspartate + ATP = L-aspartyl-tRNA(Asp) + AMP + diphosphate. Functionally, catalyzes the attachment of L-aspartate to tRNA(Asp) in a two-step reaction: L-aspartate is first activated by ATP to form Asp-AMP and then transferred to the acceptor end of tRNA(Asp). This Listeria monocytogenes serotype 4a (strain HCC23) protein is Aspartate--tRNA ligase.